The chain runs to 248 residues: 14-3-3 protein homolog 2 (248 aa).

This sequence belongs to the 14-3-3 family.

This Echinococcus granulosus (Hydatid tapeworm) protein is 14-3-3 protein homolog 2.